A 1011-amino-acid chain; its full sequence is Rap guanine nucleotide exchange factor 4 (1011 aa).

Residues 216-291 form the DEP domain; that stretch reads SRAPHMIRDR…DKYLFYRFLD (76 aa). Residues 422–425 and 432–433 contribute to the 3',5'-cyclic AMP site; these read GKLA and RA. In terms of domain architecture, N-terminal Ras-GEF spans 496 to 634; sequence QKYTVMSGTP…ELEKIVKQIS (139 aa). The region spanning 772-1009 is the Ras-GEF domain; that stretch reads SSKDLAYQMT…SQMSHRLEPR (238 aa).

In terms of assembly, interacts with RAP1B, RIMS1 and RIMS2. Probably part of a complex with RIMS2 and GTP-activated RAB3A. As to expression, expressed in cerebellum, pituitary, adrenal gland and liver.

The protein resides in the cytoplasm. It is found in the membrane. Guanine nucleotide exchange factor (GEF) for RAP1A, RAP1B and RAP2A small GTPases that is activated by binding cAMP. Seems not to activate RAB3A. Involved in cAMP-dependent, PKA-independent exocytosis through interaction with RIMS2. The sequence is that of Rap guanine nucleotide exchange factor 4 (Rapgef4) from Mus musculus (Mouse).